Consider the following 678-residue polypeptide: THO complex subunit 5 homolog B (678 aa).

Disordered stretches follow at residues methionine 1–glutamate 37 and alanine 294–aspartate 329. Positions lysine 7–lysine 10 match the Nuclear localization signal motif. The segment covering asparagine 14–glutamate 37 has biased composition (basic and acidic residues). Acidic residues predominate over residues aspartate 301–glutamate 314.

Belongs to the THOC5 family. In terms of assembly, component of the THO subcomplex, which is composed of thoc1, thoc2, thoc3, thoc5, thoc6 and thoc7. Component of the transcription/export (TREX) complex at least composed of alyref/thoc4, ddx39b, sarnp/cip29, chtop and the THO subcomplex. Interacts with thoc7.

Its subcellular location is the nucleus. The protein resides in the nucleus speckle. The protein localises to the cytoplasm. Functionally, component of the THO subcomplex of the TREX complex which is thought to couple mRNA transcription, processing and nuclear export, and which specifically associates with spliced mRNA and not with unspliced pre-mRNA. Plays a key structural role in the oligomerization of the THO-ddx39b complex. TREX is recruited to spliced mRNAs by a transcription-independent mechanism, binds to mRNA upstream of the exon-junction complex (EJC) and is recruited in a splicing- and cap-dependent manner to a region near the 5' end of the mRNA where it functions in mRNA export to the cytoplasm via the TAP/NXF1 pathway. May be involved in cell differentiation. The polypeptide is THO complex subunit 5 homolog B (thoc5-b) (Xenopus laevis (African clawed frog)).